Here is a 423-residue protein sequence, read N- to C-terminus: Histidine--tRNA ligase (423 aa).

Belongs to the class-II aminoacyl-tRNA synthetase family. In terms of assembly, homodimer.

Its subcellular location is the cytoplasm. The catalysed reaction is tRNA(His) + L-histidine + ATP = L-histidyl-tRNA(His) + AMP + diphosphate + H(+). The protein is Histidine--tRNA ligase of Actinobacillus succinogenes (strain ATCC 55618 / DSM 22257 / CCUG 43843 / 130Z).